The sequence spans 131 residues: Small ribosomal subunit protein uS8 (131 aa).

Belongs to the universal ribosomal protein uS8 family. Part of the 30S ribosomal subunit. Contacts proteins S5 and S12.

One of the primary rRNA binding proteins, it binds directly to 16S rRNA central domain where it helps coordinate assembly of the platform of the 30S subunit. This Azobacteroides pseudotrichonymphae genomovar. CFP2 protein is Small ribosomal subunit protein uS8.